A 594-amino-acid polypeptide reads, in one-letter code: Amino-acid permease 1 (594 aa).

Helical transmembrane passes span 75–95 (QMIA…GKSL), 101–121 (GSLM…ILSL), 146–166 (IGFA…PSEI), 181–201 (LNPA…NAFG), 210–230 (FVSS…AIII), 297–317 (VFYR…LVVP), 323–343 (LGNV…VLPH), 344–364 (ITNA…VFAA), 390–410 (PVIS…NAAP), 416–436 (FDWL…LSFI), 468–488 (YGVL…IFPV), and 498–518 (FFVS…SPIF). Residues 550–587 (TSELSEKDLTKPNLQSNDNKNSEDLESNTPPQKKSALQ) are disordered.

Belongs to the amino acid-polyamine-organocation (APC) superfamily.

Its subcellular location is the membrane. The polypeptide is Amino-acid permease 1 (aap1) (Schizosaccharomyces pombe (strain 972 / ATCC 24843) (Fission yeast)).